We begin with the raw amino-acid sequence, 380 residues long: MAPNIRKSHPLLKMINNSLIDLPAPSNISAWWNFGSLLAVCLMTQILTGLLLAMHYTADTSLAFSSVAHTCRNVQYGWLIRNLHANGASFFFICIFLHIGRGLYYGSYLYKETWNTGVILLLTLMATAFVGYVLPWGQMSFWGATVITNLFSAIPYIGQTLVEWTWGGFSVDNPTLTRFFALHFLLPFAIAGITVVHLTFLHESGSNNPLGISSNSDKIPFHPYYSLKDILGLTLMLTPFLTLALFSPNLLGDPENFTPANPLVTPPHIKPEWYFLFAYAILRSIPNKLGGVLALAASVLILFLIPFLHKSKQRTMTFRPLSQTLFWLLVANLLILTWIGSQPVEHPFMIIGQMASLSYFTILLILFPTIGTLENKMLNY.

4 consecutive transmembrane segments (helical) span residues 34–54 (FGSL…LLAM), 78–99 (WLIR…FLHI), 114–134 (WNTG…GYVL), and 179–199 (FFAL…VHLT). Heme b-binding residues include His84 and His98. Positions 183 and 197 each coordinate heme b. His202 provides a ligand contact to a ubiquinone. The next 4 helical transmembrane spans lie at 227–247 (LKDI…ALFS), 289–309 (LGGV…PFLH), 321–341 (LSQT…WIGS), and 348–368 (FMII…ILFP).

The protein belongs to the cytochrome b family. As to quaternary structure, the cytochrome bc1 complex contains 11 subunits: 3 respiratory subunits (MT-CYB, CYC1 and UQCRFS1), 2 core proteins (UQCRC1 and UQCRC2) and 6 low-molecular weight proteins (UQCRH/QCR6, UQCRB/QCR7, UQCRQ/QCR8, UQCR10/QCR9, UQCR11/QCR10 and a cleavage product of UQCRFS1). This cytochrome bc1 complex then forms a dimer. Heme b serves as cofactor.

The protein resides in the mitochondrion inner membrane. In terms of biological role, component of the ubiquinol-cytochrome c reductase complex (complex III or cytochrome b-c1 complex) that is part of the mitochondrial respiratory chain. The b-c1 complex mediates electron transfer from ubiquinol to cytochrome c. Contributes to the generation of a proton gradient across the mitochondrial membrane that is then used for ATP synthesis. This Gallus lafayettii (Sri Lanka junglefowl) protein is Cytochrome b (MT-CYB).